The primary structure comprises 58 residues: Conotoxin Leo-T2 (58 aa).

An N-terminal signal peptide occupies residues Met-1–Ala-22. Residues Gln-23 to Arg-47 constitute a propeptide that is removed on maturation.

This sequence belongs to the conotoxin T superfamily. Post-translationally, contains 2 disulfide bonds that can be either 'C1-C3, C2-C4' or 'C1-C4, C2-C3', since these disulfide connectivities have been observed for conotoxins with cysteine framework V (for examples, see AC P0DQQ7 and AC P81755). As to expression, expressed by the venom duct.

Its subcellular location is the secreted. In Conus leopardus (Leopard cone), this protein is Conotoxin Leo-T2.